The sequence spans 1320 residues: FERM and PDZ domain-containing protein 4 (1320 aa).

Residues 33-66 enclose the WW domain; the sequence is QVPPYGWEMMTNRDGRDYFINHMTQAIPFDDPRF. The PDZ domain occupies 78-155; that stretch reads KVEMRRDPVL…SILLTVIQPY (78 aa). In terms of domain architecture, FERM spans 204–519; that stretch reads NVLKVYLENG…GYYRLLVDSR (316 aa). Disordered regions lie at residues 809 to 847, 897 to 927, 949 to 981, 1024 to 1050, 1114 to 1139, and 1204 to 1274; these read APPPGFRDSSDEEDTQSQATSFHEDKEQGSSLQNEEIPV, YSPESSSDSGNETNSSEMTEGSELAAAQKQS, TEFPTSKAPSVGLPPKSSHGLAARPATDLPPKV, KRKSKLPEGEGKSPLSGNIPGKKQQGT, PRGPGLGNREAEGKEDGTVEGGADDA, and GHFS…ATFE. Residues 900–913 are compositionally biased toward low complexity; the sequence is ESSSDSGNETNSSE. Positions 1204–1217 are enriched in polar residues; sequence GHFSLQSSQGSSVD. Low complexity predominate over residues 1223–1232; the sequence is GSSSSACATP.

As to quaternary structure, interacts (via C-terminus) with DLG1, DLG2, DLG3 and DLG4/PSD95. Interacts (via N-terminus) with ARHGEF7; the interaction is mediated by the PDZ domain. Interacts with GPSM2 (via TPR repeat region). As to expression, expressed in various regions of the brain, including cortex, hippocampus, cerebellum, olfactory bulb and medial habenular nucleus.

Its subcellular location is the cell projection. It is found in the dendritic spine. Functionally, positive regulator of dendritic spine morphogenesis and density. Required for the maintenance of excitatory synaptic transmission. Binds phosphatidylinositol 4,5-bisphosphate. This is FERM and PDZ domain-containing protein 4 (Frmpd4) from Mus musculus (Mouse).